The chain runs to 71 residues: ATP synthase subunit c 1 (71 aa).

Transmembrane regions (helical) follow at residues 4–24 (FIGA…VGHV) and 46–66 (LFVG…IALL).

This sequence belongs to the ATPase C chain family. F-type ATPases have 2 components, F(1) - the catalytic core - and F(0) - the membrane proton channel. F(1) has five subunits: alpha(3), beta(3), gamma(1), delta(1), epsilon(1). F(0) has four main subunits: a(1), b(1), b'(1) and c(10-14). The alpha and beta chains form an alternating ring which encloses part of the gamma chain. F(1) is attached to F(0) by a central stalk formed by the gamma and epsilon chains, while a peripheral stalk is formed by the delta, b and b' chains.

The protein localises to the cell inner membrane. F(1)F(0) ATP synthase produces ATP from ADP in the presence of a proton or sodium gradient. F-type ATPases consist of two structural domains, F(1) containing the extramembraneous catalytic core and F(0) containing the membrane proton channel, linked together by a central stalk and a peripheral stalk. During catalysis, ATP synthesis in the catalytic domain of F(1) is coupled via a rotary mechanism of the central stalk subunits to proton translocation. Its function is as follows. Key component of the F(0) channel; it plays a direct role in translocation across the membrane. A homomeric c-ring of between 10-14 subunits forms the central stalk rotor element with the F(1) delta and epsilon subunits. The sequence is that of ATP synthase subunit c 1 from Cereibacter sphaeroides (strain ATCC 17029 / ATH 2.4.9) (Rhodobacter sphaeroides).